Consider the following 273-residue polypeptide: DNA repair protein RecO (273 aa).

The segment at 250–273 (NVGQNPSGKDDLNERRDVDGTGES) is disordered. Residues 257–273 (GKDDLNERRDVDGTGES) are compositionally biased toward basic and acidic residues.

It belongs to the RecO family.

Its function is as follows. Involved in DNA repair and RecF pathway recombination. The sequence is that of DNA repair protein RecO from Desulfitobacterium hafniense (strain Y51).